The primary structure comprises 109 residues: SRA stem-loop-interacting RNA-binding protein, mitochondrial (109 aa).

The residue at position 15 (Ser-15) is a Phosphoserine. Residues Pro-19–Asp-103 form the RRM domain. Thr-101 bears the Phosphothreonine mark. Residue Ser-102 is modified to Phosphoserine.

The protein resides in the mitochondrion. It localises to the nucleus. In terms of biological role, RNA-binding protein that acts as a nuclear receptor corepressor. Probably acts by binding the SRA RNA, and repressing the SRA-mediated nuclear receptor coactivation. Binds the STR7 loop of SRA RNA. Also able to repress glucocorticoid (GR), androgen (AR), thyroid (TR) and VDR-mediated transactivation. This chain is SRA stem-loop-interacting RNA-binding protein, mitochondrial (SLIRP), found in Pongo abelii (Sumatran orangutan).